The primary structure comprises 723 residues: Fatty acid oxidation complex subunit alpha (723 aa).

The interval 1-189 (MIYQANTLQV…KVGLLDAIVE (189 aa)) is enoyl-CoA hydratase/isomerase. Asp296 serves as a coordination point for substrate. A 3-hydroxyacyl-CoA dehydrogenase region spans residues 311 to 723 (NKATERAAVL…FYDGQQASSL (413 aa)). NAD(+) contacts are provided by residues Met325, Asp344, 401–403 (VVE), Lys408, and Ser430. The active-site For 3-hydroxyacyl-CoA dehydrogenase activity is His451. Asn454 is an NAD(+) binding site. Asn501 and Tyr661 together coordinate substrate.

It in the N-terminal section; belongs to the enoyl-CoA hydratase/isomerase family. This sequence in the C-terminal section; belongs to the 3-hydroxyacyl-CoA dehydrogenase family. Heterotetramer of two alpha chains (FadB) and two beta chains (FadA).

It catalyses the reaction a (3S)-3-hydroxyacyl-CoA + NAD(+) = a 3-oxoacyl-CoA + NADH + H(+). It carries out the reaction a (3S)-3-hydroxyacyl-CoA = a (2E)-enoyl-CoA + H2O. The catalysed reaction is a 4-saturated-(3S)-3-hydroxyacyl-CoA = a (3E)-enoyl-CoA + H2O. The enzyme catalyses (3S)-3-hydroxybutanoyl-CoA = (3R)-3-hydroxybutanoyl-CoA. It catalyses the reaction a (3Z)-enoyl-CoA = a 4-saturated (2E)-enoyl-CoA. It carries out the reaction a (3E)-enoyl-CoA = a 4-saturated (2E)-enoyl-CoA. It functions in the pathway lipid metabolism; fatty acid beta-oxidation. Involved in the aerobic and anaerobic degradation of long-chain fatty acids via beta-oxidation cycle. Catalyzes the formation of 3-oxoacyl-CoA from enoyl-CoA via L-3-hydroxyacyl-CoA. It can also use D-3-hydroxyacyl-CoA and cis-3-enoyl-CoA as substrate. In Vibrio atlanticus (strain LGP32) (Vibrio splendidus (strain Mel32)), this protein is Fatty acid oxidation complex subunit alpha.